A 172-amino-acid chain; its full sequence is Shikimate kinase (172 aa).

Position 17 to 22 (17 to 22) interacts with ATP; sequence GTGKST. Residue S21 coordinates Mg(2+). 3 residues coordinate substrate: D39, R63, and G84. R122 provides a ligand contact to ATP. R140 is a substrate binding site.

The protein belongs to the shikimate kinase family. In terms of assembly, monomer. It depends on Mg(2+) as a cofactor.

The protein localises to the cytoplasm. It catalyses the reaction shikimate + ATP = 3-phosphoshikimate + ADP + H(+). It functions in the pathway metabolic intermediate biosynthesis; chorismate biosynthesis; chorismate from D-erythrose 4-phosphate and phosphoenolpyruvate: step 5/7. Its function is as follows. Catalyzes the specific phosphorylation of the 3-hydroxyl group of shikimic acid using ATP as a cosubstrate. This chain is Shikimate kinase, found in Staphylococcus haemolyticus (strain JCSC1435).